We begin with the raw amino-acid sequence, 177 residues long: MELSSRKPYFIEEEEEENLASSLSEMEAGFSGNNNNSNNHGNPQNGVVSSSRFSYGRLNSLRNSQSYYYNQYSVSSPRSVVSGRFHDFRFDIQQPHFLDSCFLCKKPLGDNRDIYMYRGDTPFCSEECRQEQIERDEAKEKKQNLSHSVKSAMRRKEQSSPTRSRDYAFHNGTVAAA.

The segment covering 22-46 has biased composition (low complexity); that stretch reads SLSEMEAGFSGNNNNSNNHGNPQNG. Disordered stretches follow at residues 22–49 and 134–177; these read SLSEMEAGFSGNNNNSNNHGNPQNGVVS and ERDE…VAAA. Residues 96 to 140 form an FLZ-type zinc finger; that stretch reads HFLDSCFLCKKPLGDNRDIYMYRGDTPFCSEECRQEQIERDEAKE. 2 stretches are compositionally biased toward basic and acidic residues: residues 134-143 and 154-168; these read ERDEAKEKKQ and RRKEQSSPTRSRDYA.

Belongs to the FLZ family. As to quaternary structure, interacts with KIN10 and KIN11 via its FLZ-type zinc finger domain. Interacts with KINB1, KINB2 and KINB3 via its N-terminal part. Interacts with DSP3 and BBX21 via its FLZ-type zinc finger domain. Forms heterodimer with FLZ7 and FLZ15 in vitro.

It is found in the nucleus. The protein resides in the cytoplasm. Functionally, may act as an adapter to facilitate the interaction of SnRK1 complex with effector proteins, conferring tissue- and stimulus-type specific differences in the SnRK1 regulation pathway. The polypeptide is FCS-Like Zinc finger 1 (Arabidopsis thaliana (Mouse-ear cress)).